Reading from the N-terminus, the 392-residue chain is Casein kinase II subunit alpha (392 aa).

Residues 39–324 (YQLVRKLGRG…AREAMDHPYF (286 aa)) form the Protein kinase domain. ATP-binding positions include 45–53 (LGRGKYSEV) and K68. D156 functions as the Proton acceptor in the catalytic mechanism. The segment at 334-355 (MGGSNMPSGSSTPVSSASMMSG) is disordered. Residues 337–354 (SNMPSGSSTPVSSASMMS) are compositionally biased toward low complexity.

Belongs to the protein kinase superfamily. Ser/Thr protein kinase family. CK2 subfamily. In terms of assembly, tetramer composed of an alpha chain, an alpha' and two beta chains.

The protein resides in the nucleus. The catalysed reaction is L-seryl-[protein] + ATP = O-phospho-L-seryl-[protein] + ADP + H(+). It carries out the reaction L-threonyl-[protein] + ATP = O-phospho-L-threonyl-[protein] + ADP + H(+). Its function is as follows. Catalytic subunit of a constitutively active serine/threonine-protein kinase complex that phosphorylates a large number of substrates containing acidic residues C-terminal to the phosphorylated serine or threonine. Regulates numerous cellular processes, such as cell cycle progression, apoptosis and transcription, as well as viral infection. May act as a regulatory node which integrates and coordinates numerous signals leading to an appropriate cellular response. During mitosis, functions as a component of the p53/TP53-dependent spindle assembly checkpoint (SAC) that maintains cyclin-B-CDK1 activity and G2 arrest in response to spindle damage. Can also negatively regulate apoptosis. Phosphorylates the caspases CASP9 and CASP2 and the apoptotic regulator NOL3. Phosphorylation protects CASP9 from cleavage and activation by CASP8, and inhibits the dimerization of CASP2 and activation of CASP8. Plays an important role in the circadian clock function by phosphorylating BMAL1. The polypeptide is Casein kinase II subunit alpha (csnk2a1) (Xenopus laevis (African clawed frog)).